A 613-amino-acid polypeptide reads, in one-letter code: Na(+)/H(+) antiporter NhaA 1 (613 aa).

Residues 1–23 form a disordered region; sequence MTEASARTIGPLPSRFSRDPKTP. A na(+)/H(+) antiporter NhaA region spans residues 1–408; it reads MTEASARTIG…DPARQDEARV (408 aa). The next 11 membrane-spanning stretches (helical) occupy residues 29 to 49, 81 to 101, 110 to 130, 138 to 158, 168 to 188, 191 to 211, 231 to 251, 300 to 320, 337 to 357, 377 to 397, and 408 to 428; these read AAAA…NSPW, GLMA…FVIG, AVPV…FLTF, QAWG…LAVI, IFLL…IALF, DDLK…LAMV, IALY…AVLI, AVGP…NAGV, WGIV…ATAL, GGAA…DVAI, and VGVL…FRIT. The 205-residue stretch at 409-613 folds into the Thioredoxin domain; sequence GVLIASVLAF…SLIRALEAGR (205 aa).

The protein in the N-terminal section; belongs to the NhaA Na(+)/H(+) (TC 2.A.33) antiporter family.

It localises to the cell membrane. It carries out the reaction Na(+)(in) + 2 H(+)(out) = Na(+)(out) + 2 H(+)(in). Functionally, na(+)/H(+) antiporter that extrudes sodium in exchange for external protons. This is Na(+)/H(+) antiporter NhaA 1 from Mycobacterium sp. (strain KMS).